The primary structure comprises 1409 residues: DNA-directed RNA polymerase subunit beta' (1409 aa).

Zn(2+)-binding residues include C70, C72, C85, and C88. Residues D460, D462, and D464 each coordinate Mg(2+). Zn(2+) contacts are provided by C814, C888, C895, and C898.

This sequence belongs to the RNA polymerase beta' chain family. As to quaternary structure, the RNAP catalytic core consists of 2 alpha, 1 beta, 1 beta' and 1 omega subunit. When a sigma factor is associated with the core the holoenzyme is formed, which can initiate transcription. Mg(2+) serves as cofactor. Requires Zn(2+) as cofactor.

The enzyme catalyses RNA(n) + a ribonucleoside 5'-triphosphate = RNA(n+1) + diphosphate. Its function is as follows. DNA-dependent RNA polymerase catalyzes the transcription of DNA into RNA using the four ribonucleoside triphosphates as substrates. The polypeptide is DNA-directed RNA polymerase subunit beta' (Shewanella violacea).